Consider the following 479-residue polypeptide: 3-isopropylmalate dehydratase large subunit (479 aa).

[4Fe-4S] cluster contacts are provided by Cys353, Cys414, and Cys417.

It belongs to the aconitase/IPM isomerase family. LeuC type 1 subfamily. In terms of assembly, heterodimer of LeuC and LeuD. [4Fe-4S] cluster serves as cofactor.

The enzyme catalyses (2R,3S)-3-isopropylmalate = (2S)-2-isopropylmalate. The protein operates within amino-acid biosynthesis; L-leucine biosynthesis; L-leucine from 3-methyl-2-oxobutanoate: step 2/4. In terms of biological role, catalyzes the isomerization between 2-isopropylmalate and 3-isopropylmalate, via the formation of 2-isopropylmaleate. The sequence is that of 3-isopropylmalate dehydratase large subunit from Xanthomonas campestris pv. campestris (strain 8004).